The following is a 24-amino-acid chain: General odorant-binding protein (24 aa).

This sequence belongs to the PBP/GOBP family. In terms of assembly, homodimer. Antenna.

Its function is as follows. Present in the aqueous fluid surrounding olfactory sensory dendrites and are thought to aid in the capture and transport of hydrophobic odorants into and through this fluid. The chain is General odorant-binding protein from Antheraea polyphemus (Polyphemus moth).